The following is a 343-amino-acid chain: Mas-related G-protein coupled receptor member F (343 aa).

At 1 to 44 the chain is on the extracellular side; sequence MAGNCSWEAHPGNRNKMCPGLSEAPELYSRGFLTIEQIAMLPPP. Asn-4 carries an N-linked (GlcNAc...) asparagine glycan. Residues 45 to 66 form a helical membrane-spanning segment; the sequence is AVMNYIFLLLCLCGLVGNGLVL. Residues 67–82 are Cytoplasmic-facing; it reads WFFGFSIKRNPFSIYF. A helical transmembrane segment spans residues 83–104; sequence LHLASADVGYLFSKAVFSILNT. At 105 to 123 the chain is on the extracellular side; the sequence is GGFLGTFADYIRSVCRVLG. The chain crosses the membrane as a helical span at residues 124–144; it reads LCMFLTGVSLLPAVSAERCAS. Over 145 to 160 the chain is Cytoplasmic; sequence VIFPAWYWRRRPKRLS. Residues 161-181 form a helical membrane-spanning segment; it reads AVVCALLWVLSLLVTCLHNYF. Over 182–198 the chain is Extracellular; it reads CVFLGRGAPGAACRHMD. Residues 199-220 traverse the membrane as a helical segment; sequence IFLGILLFLLCCPLMVLPCLAL. The Cytoplasmic portion of the chain corresponds to 221–241; that stretch reads ILHVECRARRRQRSAKLNHVI. The chain crosses the membrane as a helical span at residues 242–263; sequence LAMVSVFLVSSIYLGIDWFLFW. Over 264–273 the chain is Extracellular; sequence VFQIPAPFPE. Residues 274–294 traverse the membrane as a helical segment; the sequence is YVTDLCICINSSAKPIVYFLA. Topologically, residues 295 to 343 are cytoplasmic; the sequence is GRDKSQRLWEPLRVVFQRALRDGAELGEAGGSTPNTVTMEMQCPPGNAS. Positions 320-343 are disordered; that stretch reads LGEAGGSTPNTVTMEMQCPPGNAS.

This sequence belongs to the G-protein coupled receptor 1 family. Mas subfamily.

The protein resides in the cell membrane. In terms of biological role, orphan receptor. May bind to a neuropeptide and may regulate nociceptor function and/or development, including the sensation or modulation of pain. The sequence is that of Mas-related G-protein coupled receptor member F (MRGPRF) from Homo sapiens (Human).